Here is a 189-residue protein sequence, read N- to C-terminus: Parkinson disease protein 7 homolog (189 aa).

Ala2 is modified (N-acetylalanine). 2 S-palmitoyl cysteine lipidation sites follow: Cys46 and Cys53. Tyr67 carries the phosphotyrosine modification. The active-site Nucleophile is Cys106. Cys106 bears the Cysteine sulfinic acid (-SO2H); alternate mark. The S-palmitoyl cysteine; alternate moiety is linked to residue Cys106. Residue His126 is part of the active site. A Glycyl lysine isopeptide (Lys-Gly) (interchain with G-Cter in SUMO) cross-link involves residue Lys130. An N6-acetyllysine modification is found at Lys148. Lys182 is subject to N6-succinyllysine.

Belongs to the peptidase C56 family. Homodimer. Binds EFCAB6/DJBP and PIAS2. Part of a ternary complex containing PARK7, EFCAB6/DJBP and AR. Interacts (via N-terminus) with OTUD7B. Interacts with BBS1, HIPK1, CLCF1 and MTERF. Forms a complex with PINK1 and PRKN. Interacts (via C-terminus) with NCF1; the interaction is enhanced by LPS and modulates NCF1 phosphorylation and membrane translocation. Interacts with NENF. Deglycase activity does not require glutathione as a cofactor, however, glycated glutathione constitutes a PARK7 substrate. is required as a cofactor. Sumoylated on Lys-130 by PIAS2 or PIAS4; which is essential for cell-growth promoting activity and transforming activity. In terms of processing, undergoes cleavage of a C-terminal peptide and subsequent activation of protease activity in response to oxidative stress.

It is found in the cell membrane. Its subcellular location is the cytoplasm. It localises to the nucleus. The protein resides in the membrane raft. The protein localises to the mitochondrion. It is found in the endoplasmic reticulum. The enzyme catalyses N(omega)-(1-hydroxy-2-oxopropyl)-L-arginyl-[protein] + H2O = lactate + L-arginyl-[protein] + H(+). It catalyses the reaction N(6)-(1-hydroxy-2-oxopropyl)-L-lysyl-[protein] + H2O = lactate + L-lysyl-[protein] + H(+). The catalysed reaction is S-(1-hydroxy-2-oxopropyl)-L-cysteinyl-[protein] + H2O = lactate + L-cysteinyl-[protein] + H(+). It carries out the reaction N(omega)-(1-hydroxy-2-oxoethyl)-L-arginyl-[protein] + H2O = L-arginyl-[protein] + glycolate + H(+). The enzyme catalyses N(6)-(1-hydroxy-2-oxoethyl)-L-lysyl-[protein] + H2O = glycolate + L-lysyl-[protein] + H(+). It catalyses the reaction S-(1-hydroxy-2-oxoethyl)-L-cysteinyl-[protein] + H2O = glycolate + L-cysteinyl-[protein] + H(+). The catalysed reaction is N(2)-(1-hydroxy-2-oxopropyl)-dGTP + H2O = lactate + dGTP + H(+). It carries out the reaction N(2)-(1-hydroxy-2-oxopropyl)-GTP + H2O = lactate + GTP + H(+). The enzyme catalyses N(2)-(1-hydroxy-2-oxopropyl)-GDP + H2O = lactate + GDP + H(+). It catalyses the reaction N(2)-(1-hydroxy-2-oxopropyl)-GMP + H2O = lactate + GMP + H(+). The catalysed reaction is N(2)-(1-hydroxy-2-oxoethyl)-dGTP + H2O = dGTP + glycolate + H(+). It carries out the reaction N(2)-(1-hydroxy-2-oxoethyl)-GTP + H2O = glycolate + GTP + H(+). The enzyme catalyses N(2)-(1-hydroxy-2-oxoethyl)-GDP + H2O = glycolate + GDP + H(+). It catalyses the reaction N(2)-(1-hydroxy-2-oxoethyl)-GMP + H2O = glycolate + GMP + H(+). The catalysed reaction is an N(2)-(1-hydroxy-2-oxopropyl)-guanosine in RNA + H2O = a guanosine in RNA + lactate + H(+). It carries out the reaction an N(2)-(1-hydroxy-2-oxopropyl)-2'-deoxyguanosine in DNA + H2O = a 2'-deoxyguanosine in DNA + lactate + H(+). The enzyme catalyses an N(2)-(1-hydroxy-2-oxoethyl)-guanosine in RNA + H2O = a guanosine in RNA + glycolate + H(+). It catalyses the reaction an N(2)-(1-hydroxy-2-oxoethyl)-2'-deoxyguanosine in DNA + H2O = a 2'-deoxyguanosine in DNA + glycolate + H(+). Its function is as follows. Multifunctional protein with controversial molecular function which plays an important role in cell protection against oxidative stress and cell death acting as oxidative stress sensor and redox-sensitive chaperone and protease. It is involved in neuroprotective mechanisms like the stabilization of NFE2L2 and PINK1 proteins, male fertility as a positive regulator of androgen signaling pathway as well as cell growth and transformation through, for instance, the modulation of NF-kappa-B signaling pathway. Has been described as a protein and nucleotide deglycase that catalyzes the deglycation of the Maillard adducts formed between amino groups of proteins or nucleotides and reactive carbonyl groups of glyoxals. But this function is rebuted by other works. As a protein deglycase, repairs methylglyoxal- and glyoxal-glycated proteins, and releases repaired proteins and lactate or glycolate, respectively. Deglycates cysteine, arginine and lysine residues in proteins, and thus reactivates these proteins by reversing glycation by glyoxals. Acts on early glycation intermediates (hemithioacetals and aminocarbinols), preventing the formation of advanced glycation endproducts (AGE) that cause irreversible damage. Also functions as a nucleotide deglycase able to repair glycated guanine in the free nucleotide pool (GTP, GDP, GMP, dGTP) and in DNA and RNA. Is thus involved in a major nucleotide repair system named guanine glycation repair (GG repair), dedicated to reversing methylglyoxal and glyoxal damage via nucleotide sanitization and direct nucleic acid repair. Protects histones from adduction by methylglyoxal, controls the levels of methylglyoxal-derived argininine modifications on chromatin. Able to remove the glycations and restore histone 3, histone glycation disrupts both local and global chromatin architecture by altering histone-DNA interactions as well as histone acetylation and ubiquitination levels. Displays a very low glyoxalase activity that may reflect its deglycase activity. Eliminates hydrogen peroxide and protects cells against hydrogen peroxide-induced cell death. Required for correct mitochondrial morphology and function as well as for autophagy of dysfunctional mitochondria. Plays a role in regulating expression or stability of the mitochondrial uncoupling proteins SLC25A14 and SLC25A27 in dopaminergic neurons of the substantia nigra pars compacta and attenuates the oxidative stress induced by calcium entry into the neurons via L-type channels during pacemaking. Regulates astrocyte inflammatory responses, may modulate lipid rafts-dependent endocytosis in astrocytes and neuronal cells. In pancreatic islets, involved in the maintenance of mitochondrial reactive oxygen species (ROS) levels and glucose homeostasis in an age- and diet dependent manner. Protects pancreatic beta cells from cell death induced by inflammatory and cytotoxic setting. Binds to a number of mRNAs containing multiple copies of GG or CC motifs and partially inhibits their translation but dissociates following oxidative stress. Metal-binding protein able to bind copper as well as toxic mercury ions, enhances the cell protection mechanism against induced metal toxicity. In macrophages, interacts with the NADPH oxidase subunit NCF1 to direct NADPH oxidase-dependent ROS production, and protects against sepsis. The polypeptide is Parkinson disease protein 7 homolog (Chlorocebus aethiops (Green monkey)).